A 249-amino-acid chain; its full sequence is Ribosomal RNA small subunit methyltransferase J (249 aa).

Residues 101–102, 117–118, 153–154, and Asp171 contribute to the S-adenosyl-L-methionine site; these read RD, ER, and SS.

It belongs to the methyltransferase superfamily. RsmJ family.

It localises to the cytoplasm. It carries out the reaction guanosine(1516) in 16S rRNA + S-adenosyl-L-methionine = N(2)-methylguanosine(1516) in 16S rRNA + S-adenosyl-L-homocysteine + H(+). Functionally, specifically methylates the guanosine in position 1516 of 16S rRNA. The sequence is that of Ribosomal RNA small subunit methyltransferase J from Salmonella arizonae (strain ATCC BAA-731 / CDC346-86 / RSK2980).